A 139-amino-acid chain; its full sequence is Small ribosomal subunit protein bS16 (139 aa).

The disordered stretch occupies residues Lys-84–Ala-139.

It belongs to the bacterial ribosomal protein bS16 family.

This Streptomyces lividans protein is Small ribosomal subunit protein bS16.